A 484-amino-acid polypeptide reads, in one-letter code: uncharacterized protein (484 aa).

An FAD-binding PCMH-type domain is found at 47 to 226; it reads TLPIPAAVVK…TEVTVKIFKF (180 aa).

It belongs to the FAD-binding oxidoreductase/transferase type 4 family.

This is an uncharacterized protein from Escherichia coli O157:H7.